Here is a 131-residue protein sequence, read N- to C-terminus: Profilin-7 (131 aa).

Cysteines 13 and 115 form a disulfide. The Involved in PIP2 interaction motif lies at A81–T97. T111 is modified (phosphothreonine).

The protein belongs to the profilin family. In terms of assembly, occurs in many kinds of cells as a complex with monomeric actin in a 1:1 ratio. Post-translationally, phosphorylated by MAP kinases.

Its subcellular location is the cytoplasm. The protein localises to the cytoskeleton. Its function is as follows. Binds to actin and affects the structure of the cytoskeleton. At high concentrations, profilin prevents the polymerization of actin, whereas it enhances it at low concentrations. The sequence is that of Profilin-7 from Phleum pratense (Common timothy).